A 231-amino-acid chain; its full sequence is Ribosyldihydronicotinamide dehydrogenase [quinone] (231 aa).

Residues His-12, 18-21, and 104-107 each bind FAD; these read FNGS and LYWF. 127–129 contacts substrate; sequence FDV. FAD-binding positions include 148 to 151 and Tyr-156; that span reads TTGG. 2 residues coordinate Zn(2+): His-174 and His-178. An FAD-binding site is contributed by Glu-194. Ser-197 carries the post-translational modification Phosphoserine. Arg-201 provides a ligand contact to FAD. Residue Cys-223 coordinates Zn(2+).

This sequence belongs to the NAD(P)H dehydrogenase (quinone) family. In terms of assembly, homodimer. Zn(2+) serves as cofactor. The cofactor is FAD.

The protein localises to the cytoplasm. It carries out the reaction 1-(beta-D-ribofuranosyl)-1,4-dihydronicotinamide + a quinone + H(+) = beta-nicotinamide D-riboside + a quinol. The enzyme apparently serves as a quinone reductase in connection with conjugation reactions of hydroquinones involved in detoxification pathways as well as in biosynthetic processes such as the vitamin K-dependent gamma-carboxylation of glutamate residues in prothrombin synthesis. The protein is Ribosyldihydronicotinamide dehydrogenase [quinone] (Nqo2) of Rattus norvegicus (Rat).